Consider the following 416-residue polypeptide: Prostacyclin receptor (416 aa).

Over 1 to 45 (MVASGGRPDGPPSITPESPLIVGGREWQGMAGSCWNITYVQDSVG) the chain is Extracellular. 2 cysteine pairs are disulfide-bonded: Cys-34–Cys-194 and Cys-121–Cys-199. Asn-36 carries an N-linked (GlcNAc...) asparagine glycan. Residues 46 to 67 (PATSTLMFVAGVVGNGLALGIL) form a helical membrane-spanning segment. Topologically, residues 68–80 (GARRRSHPSAFAV) are cytoplasmic. Residues 81-105 (LVTGLAVTDLLGTCFLSPAVFVAYA) form a helical membrane-spanning segment. The Extracellular segment spans residues 106 to 123 (RNSSLLGLAHGGTMLCDT). Residues 124-144 (FAFAMTFFGLASTLILFAMAV) traverse the membrane as a helical segment. The Cytoplasmic segment spans residues 145 to 163 (ERCLALSHPYLYAQLDGPR). The chain crosses the membrane as a helical span at residues 164–187 (CARLALPAIYAFCCLFCSLPLLGL). Topologically, residues 188-215 (GEHQQYCPGSWCFIRMRSPQPGGCAFSL) are extracellular. Residues 216–237 (AYASLMALLVTSIFFCNGSVTL) traverse the membrane as a helical segment. The Cytoplasmic segment spans residues 238–264 (SLCHMYRQQRRHHGSFVPTSRAREDEV). Residues 265-289 (YHLILLALMTGIMAVCSLPLTIRGF) traverse the membrane as a helical segment. At 290–302 (TQAIAPDSREMGD) the chain is on the extracellular side. A helical transmembrane segment spans residues 303–323 (LHAFRFNAFNPILDPWVFILF). Over 324–416 (RKAVFQRLKF…TEAVVACSLC (93 aa)) the chain is Cytoplasmic. Ser-366 carries the post-translational modification Phosphoserine. Cys-413 is subject to Cysteine methyl ester. Cys-413 carries the S-farnesyl cysteine lipid modification. Positions 414–416 (SLC) are cleaved as a propeptide — removed in mature form.

The protein belongs to the G-protein coupled receptor 1 family. In terms of assembly, interacts (non-isoprenylated C-terminus) with PDZK1. In terms of processing, isoprenylation does not influence ligand binding but is required for efficient coupling to the effectors adenylyl cyclase and phospholipase C.

The protein localises to the cell membrane. Functionally, receptor for prostacyclin (prostaglandin I2 or PGI2). The activity of this receptor is mediated by G(s) proteins which activate adenylate cyclase. The chain is Prostacyclin receptor (Ptgir) from Rattus norvegicus (Rat).